Here is a 589-residue protein sequence, read N- to C-terminus: Kelch-like protein 25 (589 aa).

In terms of domain architecture, BTB spans Thr-46 to Glu-114. The BACK domain occupies Cys-149–Val-250. Kelch repeat units lie at residues Thr-296 to Cys-340, Lys-341 to Asn-388, Cys-389 to Leu-444, Leu-446 to Ser-492, Gln-493 to Asn-538, and Lys-539 to Lys-585.

Component of the BCR(KLHL25) E3 ubiquitin ligase complex, at least composed of CUL3, KLHL25 and RBX1.

Its pathway is protein modification; protein ubiquitination. In terms of biological role, substrate-specific adapter of a BCR (BTB-CUL3-RBX1) E3 ubiquitin ligase complex involved in various processes, such as translation homeostasis and lipid synthesis. The BCR(KLHL25) ubiquitin ligase complex acts by mediating ubiquitination of hypophosphorylated EIF4EBP1 (4E-BP1): ubiquitination and subsequent degradation of hypophosphorylated EIF4EBP1 (4E-BP1) probably serves as a homeostatic mechanism to maintain translation and prevent eIF4E inhibition when eIF4E levels are low. The BCR(KLHL25) complex does not target EIF4EBP1 (4E-BP1) when it is hyperphosphorylated or associated with eIF4E. The BCR(KLHL25) complex also acts as a regulator of lipid synthesis by mediating ubiquitination and degradation of ACLY, thereby inhibiting lipid synthesis. BCR(KLHL25)-mediated degradation of ACLY promotes fatty acid oxidation and is required for differentiation of inducible regulatory T (iTreg) cells. The sequence is that of Kelch-like protein 25 from Rattus norvegicus (Rat).